Consider the following 260-residue polypeptide: Indole-3-glycerol phosphate synthase (260 aa).

The protein belongs to the TrpC family.

It carries out the reaction 1-(2-carboxyphenylamino)-1-deoxy-D-ribulose 5-phosphate + H(+) = (1S,2R)-1-C-(indol-3-yl)glycerol 3-phosphate + CO2 + H2O. It functions in the pathway amino-acid biosynthesis; L-tryptophan biosynthesis; L-tryptophan from chorismate: step 4/5. This is Indole-3-glycerol phosphate synthase from Neisseria meningitidis serogroup B (strain ATCC BAA-335 / MC58).